A 455-amino-acid chain; its full sequence is Gamma-aminobutyric acid receptor subunit alpha-1 (455 aa).

An N-terminal signal peptide occupies residues 1 to 27; sequence MKRLLVLCDCLWAWSLLLNALTERSYG. At 28–253 the chain is on the extracellular side; the sequence is QTSSQDELKD…FHLKRKIGYF (226 aa). An N-linked (GlcNAc...) asparagine glycan is attached at Asn-38. Arg-94 contacts 4-aminobutanoate. The N-linked (GlcNAc...) asparagine glycan is linked to Asn-138. A 4-aminobutanoate-binding site is contributed by Thr-157. A disulfide bond links Cys-166 and Cys-180. The chain crosses the membrane as a helical span at residues 254–274; that stretch reads VIQTYLPCIMTVILSQVSFWL. Topologically, residues 275 to 279 are cytoplasmic; it reads NRESV. The chain crosses the membrane as a helical span at residues 280–301; sequence PARTVFGVTTVLTMTTLSISAR. Topologically, residues 302–311 are extracellular; that stretch reads NSLPKVAYAT. The chain crosses the membrane as a helical span at residues 312-333; sequence AMDWFIAVCYAFVFSALIEFAT. At 334 to 420 the chain is on the cytoplasmic side; that stretch reads VNYFTKRGYA…TFNSVSKIDR (87 aa). The helical transmembrane segment at 421 to 440 threads the bilayer; sequence LSRIAFPLLFGIFNLVYWAT. Residues 441-455 are Extracellular-facing; sequence YLNREPQLKAPTPHQ.

The protein belongs to the ligand-gated ion channel (TC 1.A.9) family. Gamma-aminobutyric acid receptor (TC 1.A.9.5) subfamily. GABRA1 sub-subfamily. As to quaternary structure, heteropentamer, formed by a combination of alpha (GABRA1-6), beta (GABRB1-3), gamma (GABRG1-3), delta (GABRD), epsilon (GABRE), rho (GABRR1-3), pi (GABRP) and theta (GABRQ) subunits, each subunit exhibiting distinct physiological and pharmacological properties. In terms of tissue distribution, brain.

The protein resides in the postsynaptic cell membrane. It is found in the cell membrane. It carries out the reaction chloride(in) = chloride(out). With respect to regulation, allosterically activated by benzodiazepines, the neuroanesthetic alphaxalone and pentobarbital. Inhibited by the antagonist bicuculline. Potentiated by histamine. Alpha subunit of the heteropentameric ligand-gated chloride channel gated by gamma-aminobutyric acid (GABA), a major inhibitory neurotransmitter in the brain. GABA-gated chloride channels, also named GABA(A) receptors (GABAAR), consist of five subunits arranged around a central pore and contain GABA active binding site(s) located at the alpha and beta subunit interface(s). When activated by GABA, GABAARs selectively allow the flow of chloride anions across the cell membrane down their electrochemical gradient. Chloride influx into the postsynaptic neuron following GABAAR opening decreases the neuron ability to generate a new action potential, thereby reducing nerve transmission. The GABAARs can also initiate the formation of functional inhibitory GABAergic synapses. GABAARs function also as histamine receptor where histamine binds at the interface of two neighboring beta subunits and potentiates GABA response. The chain is Gamma-aminobutyric acid receptor subunit alpha-1 (GABRA1) from Gallus gallus (Chicken).